We begin with the raw amino-acid sequence, 63 residues long: uncharacterized protein (63 aa).

The span at 1-17 (MRYTDSRKLTPETDANH) shows a compositional bias: basic and acidic residues. The interval 1 to 32 (MRYTDSRKLTPETDANHKTASPQPIRRISSQT) is disordered. Residues 18–32 (KTASPQPIRRISSQT) are compositionally biased toward polar residues.

It to Y.enterocolitica HemP.

This is an uncharacterized protein from Escherichia coli (strain K12).